Here is a 289-residue protein sequence, read N- to C-terminus: Dehydrodolichyl diphosphate synthase 4 (289 aa).

Residues 2-22 (LSMLWFLLSLLSLLLLPCLRP) form a helical membrane-spanning segment.

The protein belongs to the UPP synthase family. It depends on Mg(2+) as a cofactor.

It localises to the endoplasmic reticulum membrane. It participates in protein modification; protein glycosylation. Catalyzes cis-prenyl chain elongation to produce the polyprenyl backbone of dolichol, a glycosyl carrier-lipid required for the biosynthesis of several classes of glycoprotein. The polypeptide is Dehydrodolichyl diphosphate synthase 4 (Arabidopsis thaliana (Mouse-ear cress)).